Reading from the N-terminus, the 266-residue chain is Indole-3-glycerol phosphate synthase (266 aa).

Belongs to the TrpC family.

The catalysed reaction is 1-(2-carboxyphenylamino)-1-deoxy-D-ribulose 5-phosphate + H(+) = (1S,2R)-1-C-(indol-3-yl)glycerol 3-phosphate + CO2 + H2O. It functions in the pathway amino-acid biosynthesis; L-tryptophan biosynthesis; L-tryptophan from chorismate: step 4/5. The chain is Indole-3-glycerol phosphate synthase from Herminiimonas arsenicoxydans.